The following is a 62-amino-acid chain: Large ribosomal subunit protein eL24 (62 aa).

Cys-6, Cys-9, Cys-32, and Cys-36 together coordinate Zn(2+). The C4-type zinc finger occupies 6–36 (CSFCGADIPPGYGIMYVRSDGTVQRFCSRKC).

It belongs to the eukaryotic ribosomal protein eL24 family. As to quaternary structure, part of the 50S ribosomal subunit. Forms a cluster with proteins L3 and L14. Zn(2+) serves as cofactor.

In terms of biological role, binds to the 23S rRNA. The protein is Large ribosomal subunit protein eL24 of Pyrobaculum calidifontis (strain DSM 21063 / JCM 11548 / VA1).